The sequence spans 671 residues: DNA ligase (671 aa).

NAD(+)-binding positions include 32-36 (DAEYD), 81-82 (SL), and Glu113. The active-site N6-AMP-lysine intermediate is the Lys115. The NAD(+) site is built by Arg136, Glu173, Lys290, and Lys314. The Zn(2+) site is built by Cys408, Cys411, Cys426, and Cys432. In terms of domain architecture, BRCT spans 593-671 (EIDSPFAGKT…EAEMIRLLGA (79 aa)).

Belongs to the NAD-dependent DNA ligase family. LigA subfamily. Mg(2+) serves as cofactor. Mn(2+) is required as a cofactor.

The enzyme catalyses NAD(+) + (deoxyribonucleotide)n-3'-hydroxyl + 5'-phospho-(deoxyribonucleotide)m = (deoxyribonucleotide)n+m + AMP + beta-nicotinamide D-nucleotide.. Functionally, DNA ligase that catalyzes the formation of phosphodiester linkages between 5'-phosphoryl and 3'-hydroxyl groups in double-stranded DNA using NAD as a coenzyme and as the energy source for the reaction. It is essential for DNA replication and repair of damaged DNA. This chain is DNA ligase, found in Salmonella typhi.